A 209-amino-acid chain; its full sequence is Uracil phosphoribosyltransferase (209 aa).

5-phospho-alpha-D-ribose 1-diphosphate-binding positions include Arg79, Arg104, and 131–139 (DPMLATGGS). Residues Ile194 and 199-201 (GDA) each bind uracil. Asp200 lines the 5-phospho-alpha-D-ribose 1-diphosphate pocket.

This sequence belongs to the UPRTase family. It depends on Mg(2+) as a cofactor.

It catalyses the reaction UMP + diphosphate = 5-phospho-alpha-D-ribose 1-diphosphate + uracil. It participates in pyrimidine metabolism; UMP biosynthesis via salvage pathway; UMP from uracil: step 1/1. Its activity is regulated as follows. Allosterically activated by GTP. In terms of biological role, catalyzes the conversion of uracil and 5-phospho-alpha-D-ribose 1-diphosphate (PRPP) to UMP and diphosphate. This Streptococcus thermophilus (strain CNRZ 1066) protein is Uracil phosphoribosyltransferase.